A 166-amino-acid polypeptide reads, in one-letter code: uncharacterized protein (166 aa).

Residues 1 to 58 (MSSEITEGDLQKFHDEHFNAKAVNLWNVAFAQNDRGGNSESANVEYTQSVERYPDGTI) are may interact with smn1.

As to quaternary structure, part of the core SMN complex at least composed of smn1, yip11/gem2, gem6, gem7 and gem8. Interacts with smn1; the interaction is direct. Interacts with gem7; the interaction is direct.

Its subcellular location is the cytoplasm. The protein localises to the nucleus. In terms of biological role, the SMN complex catalyzes the assembly of small nuclear ribonucleoproteins (snRNPs), the building blocks of the spliceosome, and thereby plays an important role in the splicing of cellular pre-mRNAs. Most spliceosomal snRNPs contain a common set of Sm proteins SNRPB, SNRPD1, SNRPD2, SNRPD3, SNRPE, SNRPF and SNRPG that assemble in a heptameric protein ring on the Sm site of the small nuclear RNA to form the core snRNP (Sm core). In the cytosol, the Sm proteins SNRPD1, SNRPD2, SNRPE, SNRPF and SNRPG are trapped in an inactive 6S pICln-Sm complex by the chaperone CLNS1A that controls the assembly of the core snRNP. To assemble core snRNPs, the SMN complex accepts the trapped 5Sm proteins from CLNS1A forming an intermediate. Binding of snRNA inside 5Sm triggers eviction of the SMN complex, thereby allowing binding of SNRPD3 and SNRPB to complete assembly of the core snRNP. This is an uncharacterized protein from Schizosaccharomyces pombe (strain 972 / ATCC 24843) (Fission yeast).